We begin with the raw amino-acid sequence, 120 residues long: Large ribosomal subunit protein bL17 (120 aa).

Belongs to the bacterial ribosomal protein bL17 family. As to quaternary structure, part of the 50S ribosomal subunit. Contacts protein L32.

The sequence is that of Large ribosomal subunit protein bL17 from Bacillus cereus (strain ATCC 14579 / DSM 31 / CCUG 7414 / JCM 2152 / NBRC 15305 / NCIMB 9373 / NCTC 2599 / NRRL B-3711).